The sequence spans 119 residues: uncharacterized protein (119 aa).

Helical transmembrane passes span 3–23 (WVFL…MKLS), 29–49 (LIPS…LTLT), 58–78 (AYAV…FLFF), and 87–107 (VISI…EHVA).

It belongs to the drug/metabolite transporter (DMT) superfamily. Small multidrug resistance (SMR) (TC 2.A.7.1) family.

Its subcellular location is the cell membrane. This is an uncharacterized protein from Bacillus subtilis (strain 168).